Here is a 330-residue protein sequence, read N- to C-terminus: Phosphate acyltransferase (330 aa).

The protein belongs to the PlsX family. In terms of assembly, homodimer. Probably interacts with PlsY.

Its subcellular location is the cytoplasm. It carries out the reaction a fatty acyl-[ACP] + phosphate = an acyl phosphate + holo-[ACP]. Its pathway is lipid metabolism; phospholipid metabolism. Functionally, catalyzes the reversible formation of acyl-phosphate (acyl-PO(4)) from acyl-[acyl-carrier-protein] (acyl-ACP). This enzyme utilizes acyl-ACP as fatty acyl donor, but not acyl-CoA. This chain is Phosphate acyltransferase, found in Bacillus cereus (strain G9842).